The following is a 145-amino-acid chain: D-aminoacyl-tRNA deacylase (145 aa).

The Gly-cisPro motif, important for rejection of L-amino acids signature appears at 137–138 (GP).

The protein belongs to the DTD family. As to quaternary structure, homodimer.

The protein resides in the cytoplasm. It catalyses the reaction glycyl-tRNA(Ala) + H2O = tRNA(Ala) + glycine + H(+). It carries out the reaction a D-aminoacyl-tRNA + H2O = a tRNA + a D-alpha-amino acid + H(+). An aminoacyl-tRNA editing enzyme that deacylates mischarged D-aminoacyl-tRNAs. Also deacylates mischarged glycyl-tRNA(Ala), protecting cells against glycine mischarging by AlaRS. Acts via tRNA-based rather than protein-based catalysis; rejects L-amino acids rather than detecting D-amino acids in the active site. By recycling D-aminoacyl-tRNA to D-amino acids and free tRNA molecules, this enzyme counteracts the toxicity associated with the formation of D-aminoacyl-tRNA entities in vivo and helps enforce protein L-homochirality. The protein is D-aminoacyl-tRNA deacylase of Shewanella sp. (strain ANA-3).